The sequence spans 77 residues: uncharacterized protein (77 aa).

A helical transmembrane segment spans residues 13 to 33 (VPVIRLSVFLHFFFVFPFCLL).

The protein resides in the membrane. This is an uncharacterized protein from Saccharomyces cerevisiae (strain ATCC 204508 / S288c) (Baker's yeast).